We begin with the raw amino-acid sequence, 124 residues long: Ribosome-binding factor A (124 aa).

This sequence belongs to the RbfA family. Monomer. Binds 30S ribosomal subunits, but not 50S ribosomal subunits or 70S ribosomes.

The protein localises to the cytoplasm. In terms of biological role, one of several proteins that assist in the late maturation steps of the functional core of the 30S ribosomal subunit. Associates with free 30S ribosomal subunits (but not with 30S subunits that are part of 70S ribosomes or polysomes). Required for efficient processing of 16S rRNA. May interact with the 5'-terminal helix region of 16S rRNA. In Thiobacillus denitrificans (strain ATCC 25259 / T1), this protein is Ribosome-binding factor A.